The sequence spans 238 residues: Large ribosomal subunit protein uL1 (238 aa).

This sequence belongs to the universal ribosomal protein uL1 family. In terms of assembly, part of the 50S ribosomal subunit.

Its function is as follows. Binds directly to 23S rRNA. The L1 stalk is quite mobile in the ribosome, and is involved in E site tRNA release. Protein L1 is also a translational repressor protein, it controls the translation of the L11 operon by binding to its mRNA. In Frankia alni (strain DSM 45986 / CECT 9034 / ACN14a), this protein is Large ribosomal subunit protein uL1.